A 152-amino-acid polypeptide reads, in one-letter code: Endoribonuclease YbeY (152 aa).

Positions 113, 117, and 123 each coordinate Zn(2+).

Belongs to the endoribonuclease YbeY family. Zn(2+) is required as a cofactor.

The protein resides in the cytoplasm. Single strand-specific metallo-endoribonuclease involved in late-stage 70S ribosome quality control and in maturation of the 3' terminus of the 16S rRNA. This is Endoribonuclease YbeY from Acidovorax sp. (strain JS42).